We begin with the raw amino-acid sequence, 302 residues long: 4-hydroxy-tetrahydrodipicolinate synthase (302 aa).

Position 55 (threonine 55) interacts with pyruvate. Catalysis depends on tyrosine 144, which acts as the Proton donor/acceptor. The active-site Schiff-base intermediate with substrate is lysine 172. Valine 214 is a binding site for pyruvate.

Belongs to the DapA family. As to quaternary structure, homotetramer; dimer of dimers.

It is found in the cytoplasm. It catalyses the reaction L-aspartate 4-semialdehyde + pyruvate = (2S,4S)-4-hydroxy-2,3,4,5-tetrahydrodipicolinate + H2O + H(+). The protein operates within amino-acid biosynthesis; L-lysine biosynthesis via DAP pathway; (S)-tetrahydrodipicolinate from L-aspartate: step 3/4. Its function is as follows. Catalyzes the condensation of (S)-aspartate-beta-semialdehyde [(S)-ASA] and pyruvate to 4-hydroxy-tetrahydrodipicolinate (HTPA). The polypeptide is 4-hydroxy-tetrahydrodipicolinate synthase (Prochlorococcus marinus (strain MIT 9211)).